The chain runs to 185 residues: CASP-like protein 5A1 (185 aa).

Residues 1 to 48 are Cytoplasmic-facing; that stretch reads MNVSHPAVHPVGVPPALGGQAVPPRMRMRVRMEYLVFQGMPLPGSLGG. The helical transmembrane segment at 49-69 threads the bilayer; it reads LMLRLGQFCSALIAFSVMVSI. Topologically, residues 70 to 76 are extracellular; the sequence is RDFSVTA. Residues 77–97 form a helical membrane-spanning segment; the sequence is FCYLLAATVLQCLWSLALAVI. Residues 98–121 lie on the Cytoplasmic side of the membrane; it reads DVYALLVKRSLRNPLLVSIFVVGD. A helical transmembrane segment spans residues 122-142; it reads GVTATLTFAAACASAGVVVLI. Residues 143 to 160 lie on the Extracellular side of the membrane; that stretch reads GNDISMCKSNPCANYEAA. A helical membrane pass occupies residues 161-181; the sequence is IIMAFLSWFMVSISFVLTFWM. Residues 182-185 lie on the Cytoplasmic side of the membrane; the sequence is LATL.

The protein belongs to the Casparian strip membrane proteins (CASP) family. Homodimer and heterodimers.

Its subcellular location is the cell membrane. This Pinus contorta (Shore pine) protein is CASP-like protein 5A1.